The following is a 606-amino-acid chain: Vacuolar calcium ion transporter (606 aa).

Residues 1-110 (MSPPRRVSFP…NSLDPNPGLM (110 aa)) are disordered. Residues 1 to 137 (MSPPRRVSFP…PTYWGSMKAA (137 aa)) are Cytoplasmic-facing. A compositionally biased stretch (low complexity) spans 18–30 (PPLADSPLSSPKL). Residues 36–56 (QSSSTPIVSSNLPTDTTNSAS) are compositionally biased toward polar residues. A helical membrane pass occupies residues 138 to 158 (ITSTWLNVLLVFIPIGWALYL). The Vacuolar portion of the chain corresponds to 159–170 (AKHNGGKDSISD). A helical membrane pass occupies residues 171-191 (TAVFCCTFIAIIPLAGLLGFA). Residues 192 to 204 (TEEAALRLGQTLG) are Cytoplasmic-facing. The chain crosses the membrane as a helical span at residues 205–225 (GLLNATLGNAVELIVAILALI). At 226–236 (KCELQVVQSSL) the chain is on the vacuolar side. The helical transmembrane segment at 237 to 257 (VGSILSNILLVLGMCFFAGGV) threads the bilayer. At 258 to 272 (RFAEQAIKSTAAQLN) the chain is on the cytoplasmic side. Residues 273 to 293 (ASLLLIAVIAVLIPSAFHFSI) traverse the membrane as a helical segment. Over 294-313 (SSSTSNTDASELANGEGADL) the chain is Vacuolar. Residues 314 to 334 (LSMSHAVSILLLILYLGYLLF) form a helical membrane-spanning segment. Residues 335 to 437 (QMWTHATYYV…EEEEETPQMN (103 aa)) are Cytoplasmic-facing. Residues 376–434 (DEEESYSTATTVSDAAVPPSARAEGGEVPATHGPGTAAAETGNRVEHEDAEEEEEEETP) form a disordered region. The segment covering 423-433 (EDAEEEEEEET) has biased composition (acidic residues). A helical membrane pass occupies residues 438 to 458 (VVCTIALMVIDTVLVGVTAEF). Residues 459-477 (LVDSINGMVESNPSLSAEW) lie on the Vacuolar side of the membrane. The helical transmembrane segment at 478–498 (VGLILLPIVGNAAEHFTAVSV) threads the bilayer. At 499–505 (SVKDKLD) the chain is on the cytoplasmic side. Residues 506–526 (LSISVAVGSSIQIALFVIPVI) form a helical membrane-spanning segment. At 527–535 (ELLAWTIGK) the chain is on the vacuolar side. The chain crosses the membrane as a helical span at residues 536–556 (PMTLLFDPYESIVLFLSVLIV). Residues 557-566 (NQTLADGRSN) are Cytoplasmic-facing. The helical transmembrane segment at 567–587 (WMEGMVLMMLYIIIAVSFWYY) threads the bilayer. Over 588-606 (PGSTTATLLGCQDSSSVTG) the chain is Vacuolar.

It belongs to the Ca(2+):cation antiporter (CaCA) (TC 2.A.19) family.

It is found in the vacuole membrane. Its function is as follows. Has a role in promoting intracellular calcium ion sequestration via the exchange of calcium ions for hydrogen ions across the vacuolar membrane. This Cryptococcus neoformans var. grubii serotype A (strain H99 / ATCC 208821 / CBS 10515 / FGSC 9487) (Filobasidiella neoformans var. grubii) protein is Vacuolar calcium ion transporter.